The primary structure comprises 831 residues: Serine/threonine-protein kinase ATG1 (831 aa).

A Protein kinase domain is found at 21–321 (YSVEKEIGKG…FTDFFNNEVV (301 aa)). ATP is bound by residues 27–35 (IGKGSFAVV) and K50. The active-site Proton acceptor is D168. Composition is skewed to polar residues over residues 360-382 (QQES…TGVR) and 405-419 (NSQN…ASQK). The disordered stretch occupies residues 360 to 419 (QQESAHIPPTQTDENTSVQTGVRRTSGKERLATNHPPHQQIHPEDNSQNPEQSYQSASQK).

Belongs to the protein kinase superfamily. Ser/Thr protein kinase family. APG1/unc-51/ULK1 subfamily. Homodimer. Forms a ternary complex with ATG13 and ATG17.

It is found in the cytoplasm. The protein resides in the preautophagosomal structure membrane. The catalysed reaction is L-seryl-[protein] + ATP = O-phospho-L-seryl-[protein] + ADP + H(+). The enzyme catalyses L-threonyl-[protein] + ATP = O-phospho-L-threonyl-[protein] + ADP + H(+). Its function is as follows. Serine/threonine protein kinase involved in the cytoplasm to vacuole transport (Cvt) and found to be essential in autophagy, where it is required for the formation of autophagosomes. Involved in the clearance of protein aggregates which cannot be efficiently cleared by the proteasome. Required for selective autophagic degradation of the nucleus (nucleophagy) as well as for mitophagy which contributes to regulate mitochondrial quantity and quality by eliminating the mitochondria to a basal level to fulfill cellular energy requirements and preventing excess ROS production. Also involved in endoplasmic reticulum-specific autophagic process, in selective removal of ER-associated degradation (ERAD) substrates. Plays a key role in ATG9 and ATG23 cycling through the pre-autophagosomal structure and is necessary to promote ATG18 binding to ATG9 through phosphorylation of ATG9. Catalyzes phosphorylation of ATG4, decreasing the interaction between ATG4 and ATG8 and impairing deconjugation of PE-conjugated forms of ATG8. This Kluyveromyces lactis (strain ATCC 8585 / CBS 2359 / DSM 70799 / NBRC 1267 / NRRL Y-1140 / WM37) (Yeast) protein is Serine/threonine-protein kinase ATG1.